The following is a 209-amino-acid chain: Peroxynitrite isomerase 2 (209 aa).

Positions 56–62 (GVWRGEG) match the GXWXGXG motif. Heme b is bound by residues Lys172 and His199.

This sequence belongs to the nitrobindin family. In terms of assembly, homodimer. Heme b serves as cofactor.

The enzyme catalyses peroxynitrite = nitrate. The protein operates within nitrogen metabolism. Its function is as follows. Heme-binding protein able to scavenge peroxynitrite and to protect free L-tyrosine against peroxynitrite-mediated nitration, by acting as a peroxynitrite isomerase that converts peroxynitrite to nitrate. Therefore, this protein likely plays a role in peroxynitrite sensing and in the detoxification of reactive nitrogen and oxygen species (RNS and ROS, respectively). Is able to bind nitric oxide (NO) in vitro, but may act as a sensor of peroxynitrite levels in vivo. The chain is Peroxynitrite isomerase 2 from Mycolicibacterium gilvum (strain PYR-GCK) (Mycobacterium gilvum (strain PYR-GCK)).